A 301-amino-acid chain; its full sequence is Ornithine carbamoyltransferase (301 aa).

Residues arginine 107 and 134–137 (HPLQ) contribute to the carbamoyl phosphate site. L-ornithine is bound by residues asparagine 165, aspartate 220, and 224–225 (SM). Residues 260–261 (CL) and arginine 288 each bind carbamoyl phosphate.

Belongs to the aspartate/ornithine carbamoyltransferase superfamily. OTCase family. Homotrimer.

It localises to the cytoplasm. It catalyses the reaction carbamoyl phosphate + L-ornithine = L-citrulline + phosphate + H(+). Its pathway is amino-acid biosynthesis; L-arginine biosynthesis; L-arginine from L-ornithine and carbamoyl phosphate: step 1/3. Its activity is regulated as follows. Inhibited by delta-N-phosphonoacetyl-L-ornithine. Reversibly catalyzes the transfer of the carbamoyl group from carbamoyl phosphate (CP) to the N(epsilon) atom of ornithine (ORN) to produce L-citrulline, which is a substrate for argininosuccinate synthetase, the enzyme involved in the final step in arginine biosynthesis. In Thermus thermophilus (strain ATCC BAA-163 / DSM 7039 / HB27), this protein is Ornithine carbamoyltransferase.